We begin with the raw amino-acid sequence, 241 residues long: tRNA pseudouridine synthase B (241 aa).

Residue D45 is the Nucleophile of the active site.

This sequence belongs to the pseudouridine synthase TruB family. Type 1 subfamily.

The catalysed reaction is uridine(55) in tRNA = pseudouridine(55) in tRNA. Responsible for synthesis of pseudouridine from uracil-55 in the psi GC loop of transfer RNAs. This chain is tRNA pseudouridine synthase B, found in Chlamydia muridarum (strain MoPn / Nigg).